The primary structure comprises 436 residues: 3-phosphoshikimate 1-carboxyvinyltransferase (436 aa).

Lys-22, Ser-23, and Arg-27 together coordinate 3-phosphoshikimate. Lys-22 provides a ligand contact to phosphoenolpyruvate. Positions 95 and 123 each coordinate phosphoenolpyruvate. 3-phosphoshikimate is bound by residues Ser-170, Ser-171, Gln-172, Ser-201, Asp-322, and Lys-349. Gln-172 contributes to the phosphoenolpyruvate binding site. Catalysis depends on Asp-322, which acts as the Proton acceptor. Positions 353, 397, and 422 each coordinate phosphoenolpyruvate.

It belongs to the EPSP synthase family. Monomer.

It is found in the cytoplasm. It catalyses the reaction 3-phosphoshikimate + phosphoenolpyruvate = 5-O-(1-carboxyvinyl)-3-phosphoshikimate + phosphate. The protein operates within metabolic intermediate biosynthesis; chorismate biosynthesis; chorismate from D-erythrose 4-phosphate and phosphoenolpyruvate: step 6/7. Catalyzes the transfer of the enolpyruvyl moiety of phosphoenolpyruvate (PEP) to the 5-hydroxyl of shikimate-3-phosphate (S3P) to produce enolpyruvyl shikimate-3-phosphate and inorganic phosphate. The protein is 3-phosphoshikimate 1-carboxyvinyltransferase of Ralstonia nicotianae (strain ATCC BAA-1114 / GMI1000) (Ralstonia solanacearum).